Reading from the N-terminus, the 369-residue chain is Eukaryotic translation initiation factor 3 subunit F (369 aa).

Residues 31–170 (VNIQPQAVFS…TKTYISAPVA (140 aa)) enclose the MPN domain. The span at 309–334 (LDEGKEGGEKKDGEGAEGDKKTDGQR) shows a compositional bias: basic and acidic residues. The tract at residues 309-369 (LDEGKEGGEK…EPREPREAAE (61 aa)) is disordered. Residues 335 to 353 (GQRGQGGKRGGRSGGAGGR) show a composition bias toward gly residues. The segment covering 354 to 369 (GGREQREPREPREAAE) has biased composition (basic and acidic residues).

The protein belongs to the eIF-3 subunit F family. As to quaternary structure, component of the eukaryotic translation initiation factor 3 (eIF-3) complex.

It localises to the cytoplasm. Its function is as follows. Component of the eukaryotic translation initiation factor 3 (eIF-3) complex, which is involved in protein synthesis of a specialized repertoire of mRNAs and, together with other initiation factors, stimulates binding of mRNA and methionyl-tRNAi to the 40S ribosome. The eIF-3 complex specifically targets and initiates translation of a subset of mRNAs involved in cell proliferation. The chain is Eukaryotic translation initiation factor 3 subunit F from Neurospora crassa (strain ATCC 24698 / 74-OR23-1A / CBS 708.71 / DSM 1257 / FGSC 987).